We begin with the raw amino-acid sequence, 325 residues long: Golgi to ER traffic protein 4 homolog B (325 aa).

2 disordered regions span residues 1-22 (MAAAMAEQEGSKGSARNRGGVQ) and 306-325 (SGEDDDVEDGQEDSSPIELD). Residues 307–317 (GEDDDVEDGQE) show a composition bias toward acidic residues.

It belongs to the GET4 family. In terms of assembly, component of the bag6/bat3 complex.

Its subcellular location is the cytoplasm. The protein resides in the cytosol. Functionally, as part of a cytosolic protein quality control complex, the bag6/bat3 complex, maintains misfolded and hydrophobic patches-containing proteins in a soluble state and participates in their proper delivery to the endoplasmic reticulum or alternatively can promote their sorting to the proteasome where they undergo degradation. The bag6/bat3 complex is involved in the post-translational delivery of tail-anchored/type II transmembrane proteins to the endoplasmic reticulum membrane. Similarly, the bag6/bat3 complex also functions as a sorting platform for proteins of the secretory pathway that are mislocalized to the cytosol either delivering them to the proteasome for degradation or to the endoplasmic reticulum. The bag6/bat3 complex also plays a role in the endoplasmic reticulum-associated degradation (ERAD), a quality control mechanism that eliminates unwanted proteins of the endoplasmic reticulum through their retrotranslocation to the cytosol and their targeting to the proteasome. It maintains these retrotranslocated proteins in an unfolded yet soluble state condition in the cytosol to ensure their proper delivery to the proteasome. This is Golgi to ER traffic protein 4 homolog B (get4-b) from Xenopus laevis (African clawed frog).